The sequence spans 410 residues: Argininosuccinate synthase (410 aa).

Residue 10–18 participates in ATP binding; sequence AYSGGLDTS. Positions 88 and 93 each coordinate L-citrulline. Gly-118 is a binding site for ATP. Thr-120, Asn-124, and Asp-125 together coordinate L-aspartate. Asn-124 serves as a coordination point for L-citrulline. 5 residues coordinate L-citrulline: Arg-128, Ser-177, Ser-186, Glu-262, and Tyr-274.

The protein belongs to the argininosuccinate synthase family. Type 1 subfamily. Homotetramer.

It localises to the cytoplasm. The catalysed reaction is L-citrulline + L-aspartate + ATP = 2-(N(omega)-L-arginino)succinate + AMP + diphosphate + H(+). It participates in amino-acid biosynthesis; L-arginine biosynthesis; L-arginine from L-ornithine and carbamoyl phosphate: step 2/3. The protein is Argininosuccinate synthase of Thermoanaerobacter pseudethanolicus (strain ATCC 33223 / 39E) (Clostridium thermohydrosulfuricum).